A 277-amino-acid chain; its full sequence is Glutamate racemase (277 aa).

Residues 25 to 26 and 57 to 58 each bind substrate; these read DS and YG. The active-site Proton donor/acceptor is Cys-89. 90–91 provides a ligand contact to substrate; the sequence is NT. The active-site Proton donor/acceptor is the Cys-204. 205 to 206 contributes to the substrate binding site; the sequence is TH.

Belongs to the aspartate/glutamate racemases family.

It carries out the reaction L-glutamate = D-glutamate. It participates in cell wall biogenesis; peptidoglycan biosynthesis. Functionally, provides the (R)-glutamate required for cell wall biosynthesis. The chain is Glutamate racemase from Brucella ovis (strain ATCC 25840 / 63/290 / NCTC 10512).